The chain runs to 186 residues: Lipid A palmitoyltransferase PagP (186 aa).

A signal peptide spans 1–25; that stretch reads MKVSKYVAIFFFVFIQLISVGKVFA. Active-site residues include histidine 58, aspartate 101, and serine 102.

It belongs to the lipid A palmitoyltransferase family. As to quaternary structure, homodimer.

It is found in the cell outer membrane. The enzyme catalyses lipid A (E. coli) + a 1-hexadecanoyl-2-acyl-sn-glycero-3-phosphocholine = hepta-acyl lipid A (E. coli) + a 2-acyl-sn-glycero-3-phosphocholine. It catalyses the reaction lipid IIA + a 1-hexadecanoyl-2-acyl-sn-glycero-3-phosphocholine = lipid IIB + a 2-acyl-sn-glycero-3-phosphocholine. It carries out the reaction lipid IVA (E. coli) + a 1-hexadecanoyl-2-acyl-sn-glycero-3-phosphocholine = lipid IVB (E. coli) + a 2-acyl-sn-glycero-3-phosphocholine. Its function is as follows. Transfers a palmitate residue from the sn-1 position of a phospholipid to the N-linked hydroxymyristate on the proximal unit of lipid A or its precursors. The polypeptide is Lipid A palmitoyltransferase PagP (Escherichia coli O6:K15:H31 (strain 536 / UPEC)).